The primary structure comprises 132 residues: Fatty acid-binding protein 1 (132 aa).

Residues R106 and 128–130 contribute to the a fatty acid site; that span reads RYY.

It belongs to the calycin superfamily. Fatty-acid binding protein (FABP) family. Monomer. Midgut.

The protein localises to the cytoplasm. Binds fatty acids in a 1:1 molar ratio. The chain is Fatty acid-binding protein 1 (MFB1) from Manduca sexta (Tobacco hawkmoth).